The sequence spans 657 residues: Cyclic-di-AMP phosphodiesterase PdeA (657 aa).

The next 2 helical transmembrane spans lie at Pro13–Leu35 and Ala37–Phe53. Residues Arg74–Met137 are PAS-like. Residues Asn175–Pro303 enclose the GGDEF domain. Residues Val342–Ile498 form a DHH region. Mn(2+)-binding residues include His347, Asp351, Asp353, Asp422, His446, and Asp501. The interval Val592–Leu645 is DHHA1.

It belongs to the GdpP/PdeA phosphodiesterase family. Heme b serves as cofactor. Mn(2+) is required as a cofactor.

It is found in the cell membrane. The enzyme catalyses 3',3'-c-di-AMP + H2O = 5'-O-phosphonoadenylyl-(3'-&gt;5')-adenosine + H(+). Functionally, has phosphodiesterase (PDE) activity against cyclic-di-AMP (c-di-AMP). Overexpression decreases export of c-di-AMP, leads to slightly increased susceptibility to the antibiotic cefuroxime and somewhat slower growth in macrophages. There are at least 2 PDEs for c-di-AMP in this bacteria (this one and pgpH); this may be the major PDE for intracellular growth in host macrophages. During host infection c-di-AMP is secreted into the host cytoplasm which leads to interferon-beta production and secretion by the host. c-di-AMP is a second messenger that mediates growth, cell wall stability and virulence. May monitor cellular heme or NO levels. The chain is Cyclic-di-AMP phosphodiesterase PdeA from Listeria monocytogenes serotype 1/2a (strain 10403S).